The chain runs to 59 residues: Large ribosomal subunit protein bL32 (59 aa).

Residues 1 to 59 (MAVQQNRKTPSKRGMRRSHDSLSKPTLSTEQNTGETHRRHHISADGYYRGRKVTRGQDD) form a disordered region. The span at 23-34 (SKPTLSTEQNTG) shows a compositional bias: polar residues. Positions 49 to 59 (RGRKVTRGQDD) are enriched in basic residues.

Belongs to the bacterial ribosomal protein bL32 family.

This chain is Large ribosomal subunit protein bL32, found in Halorhodospira halophila (strain DSM 244 / SL1) (Ectothiorhodospira halophila (strain DSM 244 / SL1)).